The primary structure comprises 696 residues: Two-component response regulator ORR22 (696 aa).

Residues 27–142 (RVLAVDDDPV…ELRNIWQHVV (116 aa)) form the Response regulatory domain. Asp78 carries the 4-aspartylphosphate modification. The interval 154-214 (LDFSKECNKP…DYQENDEPSA (61 aa)) is disordered. Over residues 176-185 (TCGSSDQNGR) the composition is skewed to polar residues. Residues 195–211 (GEDDDEGDDNDYQENDE) show a composition bias toward acidic residues. Residues 214–273 (AAKKPRVVWSVELHRKFVAAVNQLGIDKAVPKRILELMNVEKLTRENVASHLQKYRLYLK) constitute a DNA-binding region (myb-like GARP).

This sequence belongs to the ARR family. Type-B subfamily. In terms of processing, two-component system major event consists of a His-to-Asp phosphorelay between a sensor histidine kinase (HK) and a response regulator (RR). In plants, the His-to-Asp phosphorelay involves an additional intermediate named Histidine-containing phosphotransfer protein (HPt). This multistep phosphorelay consists of a His-Asp-His-Asp sequential transfer of a phosphate group between first a His and an Asp of the HK protein, followed by the transfer to a conserved His of the HPt protein and finally the transfer to an Asp in the receiver domain of the RR protein.

The protein resides in the nucleus. Transcriptional activator that binds specific DNA sequence. Functions as a response regulator involved in His-to-Asp phosphorelay signal transduction system. Phosphorylation of the Asp residue in the receiver domain activates the ability of the protein to promote the transcription of target genes. May directly activate some type-A response regulators in response to cytokinins. The chain is Two-component response regulator ORR22 from Oryza sativa subsp. indica (Rice).